The following is a 730-amino-acid chain: Arginine decarboxylase 1B, chloroplastic (730 aa).

Residues 1 to 37 (MPALGCCVDAAVSPPPGYSFLWDSSLPAPEIFPSGVP) constitute a chloroplast transit peptide. K157 carries the post-translational modification N6-(pyridoxal phosphate)lysine. Residues S309, G346, and 395-398 (ESGR) contribute to the pyridoxal 5'-phosphate site. 460–461 (YA) provides a ligand contact to substrate. The Proton donor; shared with dimeric partner role is filled by C548. Substrate is bound at residue D549. Y590 contributes to the pyridoxal 5'-phosphate binding site.

The protein belongs to the Orn/Lys/Arg decarboxylase class-II family. SpeA subfamily. It depends on Mg(2+) as a cofactor. Pyridoxal 5'-phosphate is required as a cofactor.

The protein resides in the plastid. The protein localises to the chloroplast. The catalysed reaction is L-arginine + H(+) = agmatine + CO2. The protein operates within alkaloid biosynthesis; nicotine biosynthesis. It functions in the pathway amine and polyamine biosynthesis; agmatine biosynthesis; agmatine from L-arginine: step 1/1. Functionally, involved in the biosynthesis of pyridine alkaloid natural products, leading mainly to the production of anabasine, anatabine, nicotine and nornicotine, effective deterrents against herbivores with antiparasitic and pesticide properties (neurotoxins); nornicotine serves as the precursor in the synthesis of the carcinogen compound N'-nitrosonornicotine (NNN). Required for the biosynthesis of putrescine. Catalyzes the first step of polyamine (PA) biosynthesis to produce putrescine from arginine. This Nicotiana tabacum (Common tobacco) protein is Arginine decarboxylase 1B, chloroplastic.